The following is a 144-amino-acid chain: Putative sugar phosphate isomerase RBE_0278 (144 aa).

Histidine 12 lines the substrate pocket. The active-site Proton donor is histidine 101. Arginine 135 contributes to the substrate binding site.

This sequence belongs to the LacAB/RpiB family.

This chain is Putative sugar phosphate isomerase RBE_0278, found in Rickettsia bellii (strain RML369-C).